Here is a 1067-residue protein sequence, read N- to C-terminus: Protein CLEC16A homolog (1067 aa).

One can recognise an FPL domain in the interval 50–199 (LRCIAEILIW…AVRTISLNVY (150 aa)). Residues 333-353 (SIVALFLLSLVFLVVSHAPLV) traverse the membrane as a helical segment. Low complexity predominate over residues 409-418 (SSSSYALSED). Disordered regions lie at residues 409–434 (SSSS…LDSQ), 837–861 (ASSS…PMFS), 876–993 (SNSA…SRSH), and 1037–1067 (QSSE…IETV). A compositionally biased stretch (polar residues) spans 421 to 432 (VESSSPATTELD). Residues 876-888 (SNSAGVSRTQMAP) show a composition bias toward polar residues. The span at 917-926 (RADHSDRERS) shows a compositional bias: basic and acidic residues. Residues 927-947 (PSVSMGSHSSSQSRENSQPRS) show a composition bias toward low complexity. Basic and acidic residues predominate over residues 951-974 (RSRESSPRMPRPRSEEIPLEDFQH). The span at 975 to 993 (SRNNSPHSRGNPSPASRSH) shows a compositional bias: polar residues. The segment covering 1057 to 1067 (EGRRRGAIETV) has biased composition (basic and acidic residues).

The protein belongs to the CLEC16A/gop-1 family. In terms of assembly, interacts with the class C Vps-HOPS complex components; Car, Dor and Vps16a.

The protein resides in the cytoplasmic vesicle. It is found in the autophagosome membrane. It localises to the late endosome membrane. Its subcellular location is the golgi apparatus membrane. Functionally, required for mitophagy, autophagy and endosome maturation, possibly by acting in multiple membrane trafficking pathways. Required for endosome trafficking and maturation. Functions with the class C Vps-HOPS complex member Vps16a to promote endosomal maturation into degradative late endosomes and lysosomes. In response to starvation, functions at an early stage of autophagy to promote autophagosome growth and efficient autophagy. Essential for the recruitment of lva-positive Golgi elements to autophagosomes. Likely to function by promoting membrane traffic from the Golgi complex to the developing autophagosomes. Also regulates synaptic growth at the neuromuscular junctions (NMJ) by down-regulating BMP signaling. In Drosophila melanogaster (Fruit fly), this protein is Protein CLEC16A homolog.